Consider the following 185-residue polypeptide: Ribosome-recycling factor (185 aa).

This sequence belongs to the RRF family.

The protein localises to the cytoplasm. Responsible for the release of ribosomes from messenger RNA at the termination of protein biosynthesis. May increase the efficiency of translation by recycling ribosomes from one round of translation to another. This chain is Ribosome-recycling factor, found in Marinomonas sp. (strain MWYL1).